Reading from the N-terminus, the 150-residue chain is Putative HTH-type transcriptional regulator rrf2-like (150 aa).

The region spanning 1 to 139 (MITQKMKYAL…DSLTLEDMLA (139 aa)) is the HTH rrf2-type domain.

The polypeptide is Putative HTH-type transcriptional regulator rrf2-like (Rhodobacter capsulatus (strain ATCC BAA-309 / NBRC 16581 / SB1003)).